The sequence spans 219 residues: PKHD-type hydroxylase SYNPCC7002_A2658 (219 aa).

The region spanning 78 to 172 (TVHTLLFSRY…RLVAVGWVQS (95 aa)) is the Fe2OG dioxygenase domain. His96, Asp98, and His153 together coordinate Fe cation. A 2-oxoglutarate-binding site is contributed by Arg163.

It depends on Fe(2+) as a cofactor. L-ascorbate serves as cofactor.

The sequence is that of PKHD-type hydroxylase SYNPCC7002_A2658 from Picosynechococcus sp. (strain ATCC 27264 / PCC 7002 / PR-6) (Agmenellum quadruplicatum).